A 152-amino-acid polypeptide reads, in one-letter code: UPF0178 protein Plav_1521 (152 aa).

Residues 114 to 152 are disordered; that stretch reads LRETGQSKGGGPAFSKEDRSRFLRSLEDTVQAIRRRPPP. The span at 128–140 shows a compositional bias: basic and acidic residues; it reads SKEDRSRFLRSLE.

Belongs to the UPF0178 family.

In Parvibaculum lavamentivorans (strain DS-1 / DSM 13023 / NCIMB 13966), this protein is UPF0178 protein Plav_1521.